The sequence spans 641 residues: MTEFSKTPLLDTIRTPEDLRKLRIDQVRQVADELRLETIDAVSVTGGHFGAGLGVVELTTALHYVFDTPRDRLIWDVGHQAYPHKILTGRRDRIRTLRTGGGLSGFTKRTESDHDPFGAGHSSTSISAGLGMAVASELAGKKNNVIAVIGDGSISAGMAYEAMNNAGAMNSRLIVILNDNNMSIAPPVGAMSAYLSRLYSGKTYRSLREAGKQIGKHLPKLIADRAARAEEYSRGFMMGGGTLFEELGFYYVGPVDGHNLDHLLPILQNVRDADTGPFLIHVVTQKGKGYGPAEAAADKYHAVVKFDIATGAQAKAKSNAPSYQNVFGQSLVKEAQKDDKIVGITAAMPSGTGIDIFEKAFPKRTFDVGIAEQHAVTFAAGLATEGYKPFCAIYSTFLQRAYDQIVHDVAIQKLPVRFAIDRAGLVGADGATHAGSFDNAYLGCLPNMVIMAAADEAELVHMVATQVAIDDRPSAVRYPRGEGRGVEMPEVGIPLEIGKGRVIRQGNKVALLSFGTRLAEAEKAADELATLGLSTTVADARFMKPLDVELVLKLARDHEVLLTIEEGSIGGFGSHVMQTLAEHGMLDGEVKMRALVLPDVFMDHDNPVAMYARAGLDAKAIVKKVFDVLGKDAATETSKLA.

Thiamine diphosphate-binding positions include histidine 79 and 120 to 122; that span reads GHS. Mg(2+) is bound at residue aspartate 151. Thiamine diphosphate-binding positions include 152–153, asparagine 180, tyrosine 290, and glutamate 372; that span reads GS. Residue asparagine 180 coordinates Mg(2+).

Belongs to the transketolase family. DXPS subfamily. As to quaternary structure, homodimer. Mg(2+) is required as a cofactor. It depends on thiamine diphosphate as a cofactor.

It carries out the reaction D-glyceraldehyde 3-phosphate + pyruvate + H(+) = 1-deoxy-D-xylulose 5-phosphate + CO2. It functions in the pathway metabolic intermediate biosynthesis; 1-deoxy-D-xylulose 5-phosphate biosynthesis; 1-deoxy-D-xylulose 5-phosphate from D-glyceraldehyde 3-phosphate and pyruvate: step 1/1. Functionally, catalyzes the acyloin condensation reaction between C atoms 2 and 3 of pyruvate and glyceraldehyde 3-phosphate to yield 1-deoxy-D-xylulose-5-phosphate (DXP). The chain is 1-deoxy-D-xylulose-5-phosphate synthase from Rhodopseudomonas palustris (strain TIE-1).